The sequence spans 67 residues: Large ribosomal subunit protein uL30 (67 aa).

The protein belongs to the universal ribosomal protein uL30 family. As to quaternary structure, part of the 50S ribosomal subunit.

The chain is Large ribosomal subunit protein uL30 from Thermotoga maritima (strain ATCC 43589 / DSM 3109 / JCM 10099 / NBRC 100826 / MSB8).